The sequence spans 407 residues: 1-deoxy-D-xylulose 5-phosphate reductoisomerase (407 aa).

Positions 25, 26, 27, 28, 53, and 136 each coordinate NADPH. Residue lysine 137 participates in 1-deoxy-D-xylulose 5-phosphate binding. Glutamate 138 contributes to the NADPH binding site. Aspartate 162 lines the Mn(2+) pocket. 4 residues coordinate 1-deoxy-D-xylulose 5-phosphate: serine 163, glutamate 164, serine 188, and histidine 211. Glutamate 164 provides a ligand contact to Mn(2+). An NADPH-binding site is contributed by glycine 217. Serine 224, asparagine 229, lysine 230, and glutamate 233 together coordinate 1-deoxy-D-xylulose 5-phosphate. Glutamate 233 is a Mn(2+) binding site.

This sequence belongs to the DXR family. It depends on Mg(2+) as a cofactor. Mn(2+) serves as cofactor.

It carries out the reaction 2-C-methyl-D-erythritol 4-phosphate + NADP(+) = 1-deoxy-D-xylulose 5-phosphate + NADPH + H(+). Its pathway is isoprenoid biosynthesis; isopentenyl diphosphate biosynthesis via DXP pathway; isopentenyl diphosphate from 1-deoxy-D-xylulose 5-phosphate: step 1/6. In terms of biological role, catalyzes the NADPH-dependent rearrangement and reduction of 1-deoxy-D-xylulose-5-phosphate (DXP) to 2-C-methyl-D-erythritol 4-phosphate (MEP). In Bradyrhizobium sp. (strain ORS 278), this protein is 1-deoxy-D-xylulose 5-phosphate reductoisomerase.